We begin with the raw amino-acid sequence, 176 residues long: NAD(P)H-quinone oxidoreductase subunit 6, chloroplastic (176 aa).

5 consecutive transmembrane segments (helical) span residues 10 to 30 (FLLV…VLLP), 32 to 52 (PIFS…LYIL), 61 to 81 (AQLL…VMFM), 92 to 112 (LWTI…FLLM), and 152 to 172 (FFLP…GAIS).

The protein belongs to the complex I subunit 6 family. In terms of assembly, NDH is composed of at least 16 different subunits, 5 of which are encoded in the nucleus.

It is found in the plastid. It localises to the chloroplast thylakoid membrane. It carries out the reaction a plastoquinone + NADH + (n+1) H(+)(in) = a plastoquinol + NAD(+) + n H(+)(out). The catalysed reaction is a plastoquinone + NADPH + (n+1) H(+)(in) = a plastoquinol + NADP(+) + n H(+)(out). Its function is as follows. NDH shuttles electrons from NAD(P)H:plastoquinone, via FMN and iron-sulfur (Fe-S) centers, to quinones in the photosynthetic chain and possibly in a chloroplast respiratory chain. The immediate electron acceptor for the enzyme in this species is believed to be plastoquinone. Couples the redox reaction to proton translocation, and thus conserves the redox energy in a proton gradient. The sequence is that of NAD(P)H-quinone oxidoreductase subunit 6, chloroplastic (ndhG) from Arabidopsis thaliana (Mouse-ear cress).